Consider the following 444-residue polypeptide: tRNA modification GTPase MnmE (444 aa).

The (6S)-5-formyl-5,6,7,8-tetrahydrofolate site is built by R28, E86, and R126. The 145-residue stretch at 224–368 (GFCVVLAGAP…LLDAIQGSAA (145 aa)) folds into the TrmE-type G domain. N234 is a K(+) binding site. GTP contacts are provided by residues 234–239 (NAGKST), 253–259 (SDIPGTT), and 278–281 (DTAG). A Mg(2+)-binding site is contributed by S238. K(+)-binding residues include S253, I255, and T258. T259 is a Mg(2+) binding site. K444 is a (6S)-5-formyl-5,6,7,8-tetrahydrofolate binding site.

It belongs to the TRAFAC class TrmE-Era-EngA-EngB-Septin-like GTPase superfamily. TrmE GTPase family. Homodimer. Heterotetramer of two MnmE and two MnmG subunits. K(+) is required as a cofactor.

It is found in the cytoplasm. Its function is as follows. Exhibits a very high intrinsic GTPase hydrolysis rate. Involved in the addition of a carboxymethylaminomethyl (cmnm) group at the wobble position (U34) of certain tRNAs, forming tRNA-cmnm(5)s(2)U34. This Methylorubrum populi (strain ATCC BAA-705 / NCIMB 13946 / BJ001) (Methylobacterium populi) protein is tRNA modification GTPase MnmE.